Reading from the N-terminus, the 504-residue chain is Cystathionine beta-synthase (504 aa).

Cys12 and His23 together coordinate heme. Residue Lys78 is modified to N6-(pyridoxal phosphate)lysine. Residues Asn108, 215–219, and Ser307 contribute to the pyridoxal 5'-phosphate site; that span reads GTGGT. 2 consecutive CBS domains span residues 375–434 and 442–498; these read LSFD…IVKC and MVKQ…NGTS.

The protein belongs to the cysteine synthase/cystathionine beta-synthase family. Homodimer. The cofactor is pyridoxal 5'-phosphate.

The enzyme catalyses L-homocysteine + L-serine = L,L-cystathionine + H2O. Its pathway is amino-acid biosynthesis; L-cysteine biosynthesis; L-cysteine from L-homocysteine and L-serine: step 1/2. With respect to regulation, has no response to S-adenosyl-methionine/AdoMet, unlike mammalian orthologs. Binds non-covalently to a heme group that may control the redox sensitivity of the enzyme. Its function is as follows. Hydro-lyase catalyzing the first step of the transsulfuration pathway, where the hydroxyl group of L-serine is displaced by L-homocysteine in a beta-replacement reaction to form L-cystathionine, the precursor of L-cysteine. In Apis mellifera (Honeybee), this protein is Cystathionine beta-synthase.